The sequence spans 386 residues: Demethylsterigmatocystin 6-O-methyltransferase (386 aa).

Residue 137–150 (FDISGPCTQILPDF) coordinates substrate. The segment at 177-197 (MFEWMPQHPKHMESLGHLMAL) is substrate binding. S-adenosyl-L-methionine contacts are provided by residues 228–229 (GG), Asp253, 273–274 (NF), and Arg289. His293 (proton acceptor) is an active-site residue.

Belongs to the class I-like SAM-binding methyltransferase superfamily. Cation-independent O-methyltransferase family. COMT subfamily.

It catalyses the reaction 6-demethylsterigmatocystin + S-adenosyl-L-methionine = sterigmatocystin + S-adenosyl-L-homocysteine + H(+). Its pathway is mycotoxin biosynthesis; aflatoxin biosynthesis. Functionally, catalyzes both the conversion of demethylsterigmatocystin (DMST) to sterigmatocystin and the conversion of dihydrodemethylsterigmatocystin to dihydrosterigmatocystin (DHDMST) during aflatoxin biosynthesis. The sequence is that of Demethylsterigmatocystin 6-O-methyltransferase (omtB) from Aspergillus flavus (strain ATCC 200026 / FGSC A1120 / IAM 13836 / NRRL 3357 / JCM 12722 / SRRC 167).